We begin with the raw amino-acid sequence, 301 residues long: CPX chromosomal region candidate gene 1 protein (301 aa).

Positions 1–77 (MSYPTKEGSD…ENSELETEIQ (77 aa)) are disordered. Polar residues predominate over residues 44-60 (VETNPINREPGTATSQE).

As to expression, expressed in a variety of fetal tissues.

This chain is CPX chromosomal region candidate gene 1 protein (CPXCR1), found in Homo sapiens (Human).